A 77-amino-acid chain; its full sequence is Antitoxin VapB2 (77 aa).

In terms of domain architecture, SpoVT-AbrB spans 4–46 (ASVFMTNRSQAVRLPAEVRFSEEIKKLSVRVSGSDRILSPLNQ).

It belongs to the VapB family. As to quaternary structure, probably forms a complex with cognate toxin VapC2.

In terms of biological role, antitoxin component of a type II toxin-antitoxin (TA) system. Neutralizes the effect of cognate toxin VapC2 but not non-cognate toxin VapC2. The sequence is that of Antitoxin VapB2 from Haemophilus influenzae (strain 86-028NP).